The sequence spans 142 residues: Large ribosomal subunit protein uL11 (142 aa).

This sequence belongs to the universal ribosomal protein uL11 family. As to quaternary structure, part of the ribosomal stalk of the 50S ribosomal subunit. Interacts with L10 and the large rRNA to form the base of the stalk. L10 forms an elongated spine to which L12 dimers bind in a sequential fashion forming a multimeric L10(L12)X complex. Post-translationally, one or more lysine residues are methylated.

In terms of biological role, forms part of the ribosomal stalk which helps the ribosome interact with GTP-bound translation factors. The chain is Large ribosomal subunit protein uL11 from Ruthia magnifica subsp. Calyptogena magnifica.